Here is a 482-residue protein sequence, read N- to C-terminus: Sugar transporter ERD6-like 16 (482 aa).

12 consecutive transmembrane segments (helical) span residues 42-62 (LMVL…GSCV), 80-100 (LAEF…GAVM), 117-137 (SACF…ALLL), 142-162 (FFTG…IAEI), 173-193 (TLNQ…GSLI), 197-217 (TLAL…CFIP), 280-300 (VIIG…GIGF), 316-336 (LGTI…TILI), 344-364 (LIMI…TSFL), 382-402 (GVLI…WVIM), 413-433 (IAGS…SYTF), and 443-463 (GTFY…AKMV).

Belongs to the major facilitator superfamily. Sugar transporter (TC 2.A.1.1) family.

It is found in the membrane. Functionally, sugar transporter. This Arabidopsis thaliana (Mouse-ear cress) protein is Sugar transporter ERD6-like 16.